The following is a 382-amino-acid chain: Nuclear hormone receptor family member nhr-106 (382 aa).

Positions 2–78 (QTTCEICEVP…MGMMPEKVKV (77 aa)) form a DNA-binding region, nuclear receptor. 2 consecutive NR C4-type zinc fingers follow at residues 5 to 25 (CEIC…CRGC) and 42 to 61 (CKYS…CKSC). The region spanning 110–380 (DVSNLITRGL…FSNPEMFIDS (271 aa)) is the NR LBD domain.

The protein belongs to the nuclear hormone receptor family.

The protein localises to the nucleus. In terms of biological role, orphan nuclear receptor. This Caenorhabditis elegans protein is Nuclear hormone receptor family member nhr-106 (nhr-106).